The sequence spans 193 residues: MKLLEERILKDGHILDDNILKVDSFLTHQVDFSLMREIGKVFAEKFAATGITKVVTIEASGIAPAVFTAEALNVPMIFAKKAKNITMNEGILTAQVYSFTKQVTSTVSIAGKFLSPEDKVLIIDDFLANGQAAKGLIQIIEQAGATVQAIGIVIEKSFQDGRDLLEKAGYPVLSLARLDRFENGQVVFKEADL.

Xanthine is bound by residues Leu-20 and Thr-27. A 5-phospho-alpha-D-ribose 1-diphosphate-binding site is contributed by 128–132; the sequence is ANGQA. Lys-156 contacts xanthine.

This sequence belongs to the purine/pyrimidine phosphoribosyltransferase family. Xpt subfamily. Homodimer.

It is found in the cytoplasm. The catalysed reaction is XMP + diphosphate = xanthine + 5-phospho-alpha-D-ribose 1-diphosphate. It functions in the pathway purine metabolism; XMP biosynthesis via salvage pathway; XMP from xanthine: step 1/1. Functionally, converts the preformed base xanthine, a product of nucleic acid breakdown, to xanthosine 5'-monophosphate (XMP), so it can be reused for RNA or DNA synthesis. The sequence is that of Xanthine phosphoribosyltransferase from Streptococcus pneumoniae serotype 2 (strain D39 / NCTC 7466).